Here is a 585-residue protein sequence, read N- to C-terminus: MSSPLDHLKTQLQRAMVAAYGETLSGADPLLVNASHPKFGDYQSNAPLPLAKQLNQPPRTIASTIVDHLEVGEAWEPPTIAGPGFINFTLKTSYLASQLELRLTDPRLGISAVKLPLRVVVDFSSPNIAKEMHVGHLRSTIIGDCLARILEFLGHEVLRLNHVGDWGTQFGMLITYLREVCPEALTAPDAVDLGDLVAFYRQAKQRFDSDPDFQAIARQEVVRLQSGEPDSLHAWQLLCAQSRREFEKIYNLLDIKLTERGESFYNPLLPQVIQALDQTGLLVEDQGAKCVFLEGYTNKAGDPQPLIVQKSDGGYIYATTDLAALRYRIEQDQADWIIYVTDAGQSTHFAQVFQVAQRAGWIPNRIRLVHVPFGLVQGEDGKKLKTRSGDTVRLQDLLDEAIDRARNDLVSRLEAEGRQETPEFIDHVAQVVGIGAVKYADLSQNRTSNYVFSYDKMLSLQGNTAPYLIYAYVRVQGISRKGQIDLEQLTEQPTLSLQEEEEKLLARHLLQLEDVLAQVTEDLLPNRLCQYLFELSQKFNQFYDRCPILQAEEPLRNSRLGLAQLTARTLKLGLSLLGIQVLERM.

Positions 126 to 136 (PNIAKEMHVGH) match the 'HIGH' region motif.

Belongs to the class-I aminoacyl-tRNA synthetase family. Monomer.

The protein localises to the cytoplasm. It carries out the reaction tRNA(Arg) + L-arginine + ATP = L-arginyl-tRNA(Arg) + AMP + diphosphate. This chain is Arginine--tRNA ligase, found in Cyanothece sp. (strain PCC 7425 / ATCC 29141).